The primary structure comprises 237 residues: Phosphoribosylaminoimidazole-succinocarboxamide synthase (237 aa).

The protein belongs to the SAICAR synthetase family.

It catalyses the reaction 5-amino-1-(5-phospho-D-ribosyl)imidazole-4-carboxylate + L-aspartate + ATP = (2S)-2-[5-amino-1-(5-phospho-beta-D-ribosyl)imidazole-4-carboxamido]succinate + ADP + phosphate + 2 H(+). It participates in purine metabolism; IMP biosynthesis via de novo pathway; 5-amino-1-(5-phospho-D-ribosyl)imidazole-4-carboxamide from 5-amino-1-(5-phospho-D-ribosyl)imidazole-4-carboxylate: step 1/2. The polypeptide is Phosphoribosylaminoimidazole-succinocarboxamide synthase (Shigella boydii serotype 4 (strain Sb227)).